A 505-amino-acid chain; its full sequence is OVARIAN TUMOR DOMAIN-containing deubiquitinating enzyme 6 (505 aa).

Positions 1-191 (MTRILVQRGS…NSSDEHMPCY (191 aa)) are disordered. Over residues 9 to 30 (GSSGSSSNSSRPSSSSSSSSGS) the composition is skewed to low complexity. The segment covering 51–72 (DEKQEEVTVVEKAECSDAKDVA) has biased composition (basic and acidic residues). Residues 73–86 (VDSDEPADREDDEG) are compositionally biased toward acidic residues. Residues 115–124 (PPVPAPPPKP) are compositionally biased toward pro residues. Low complexity predominate over residues 159 to 173 (SSRSSPTGSHPSSPR). Basic and acidic residues predominate over residues 174 to 188 (SHSENEGYNSSDEHM). The region spanning 216-339 (FEIRRMLEDG…GNHYNSLVDP (124 aa)) is the OTU domain. Asp224 is a catalytic residue. The Nucleophile role is filled by Cys227. His332 is a catalytic residue. A disordered region spans residues 416 to 447 (RIGPKESSTSNAETSSSGARPSGSDSKPAEAV). Over residues 421–441 (ESSTSNAETSSSGARPSGSDS) the composition is skewed to low complexity. The UBA domain occupies 446–491 (AVKEKTVLSSSIEMVLSMGFSYAQAMEAYSIFGDDVDSMVCYVLET).

It belongs to the peptidase C85 family. Interacts with KDM1C. In terms of tissue distribution, mostly expressed in stems flowers and siliques, and, to a lower extent, in leaves, roots and seedlings.

The protein localises to the nucleus. The protein resides in the cytoplasm. It carries out the reaction Thiol-dependent hydrolysis of ester, thioester, amide, peptide and isopeptide bonds formed by the C-terminal Gly of ubiquitin (a 76-residue protein attached to proteins as an intracellular targeting signal).. Its function is as follows. Hydrolase that can remove conjugated ubiquitin from proteins in vitro and may therefore play an important regulatory role at the level of protein turnover by preventing degradation. Binds chromatin (e.g. nucleosomes and histones) and has enzymatic histone deubiquitinase activity, specific for the H2B histone. Can both repress (e.g. OSR2) and promote (e.g. AN3) the expression of target genes by associating with chromatin, deubiquitinating H2B and regulating its euchromatic histone marks (e.g. H3ac and H3K4me). In association with LDL1/KDM1C, involved in transcriptional gene repression via histone deubiquitination and demethylation. Promotes the concerted epigenetic regulation and repression (e.g. the removal of euchromatic histone acetylation, ubiquitination, and methylation marks) of a set of genes (e.g. GA20OX, WUS, OSR2, ARL and ABI5) that collectively limit plant growth thus stimulating plant growth and increasing cell size. This chain is OVARIAN TUMOR DOMAIN-containing deubiquitinating enzyme 6, found in Arabidopsis thaliana (Mouse-ear cress).